A 293-amino-acid polypeptide reads, in one-letter code: Tumor necrosis factor receptor type 1-associated DEATH domain protein (293 aa).

The Nuclear export signal motif lies at 156-171 (LRDDEVTQLEQQLQNS). Positions 200–290 (TPADQQRFAA…SMAEIMLGIQ (91 aa)) constitute a Death domain. Positions 216 to 229 (KRVGRALQKNCRAL) match the Nuclear localization signal motif.

In terms of assembly, heterodimer with tnfrsf1a.

The protein localises to the nucleus. Its subcellular location is the cytoplasm. The protein resides in the cytoskeleton. Adapter molecule for tnfrsf1a that specifically associates with the cytoplasmic domain of activated tnfrsf1a mediating its interaction with fadd. This Danio rerio (Zebrafish) protein is Tumor necrosis factor receptor type 1-associated DEATH domain protein.